The chain runs to 1235 residues: ATP-dependent helicase/nuclease subunit A (1235 aa).

A UvrD-like helicase ATP-binding domain is found at 12–482 (SLWTDDQWKA…IDLSQNFRSR (471 aa)). 33 to 40 (AAAGSGKT) provides a ligand contact to ATP. Residues 509-800 (AAELTLGASF…RMMTIHASKG (292 aa)) enclose the UvrD-like helicase C-terminal domain.

Belongs to the helicase family. AddA subfamily. Heterodimer of AddA and AddB/RexB. Requires Mg(2+) as cofactor.

It carries out the reaction Couples ATP hydrolysis with the unwinding of duplex DNA by translocating in the 3'-5' direction.. The enzyme catalyses ATP + H2O = ADP + phosphate + H(+). Its function is as follows. The heterodimer acts as both an ATP-dependent DNA helicase and an ATP-dependent, dual-direction single-stranded exonuclease. Recognizes the chi site generating a DNA molecule suitable for the initiation of homologous recombination. The AddA nuclease domain is required for chi fragment generation; this subunit has the helicase and 3' -&gt; 5' nuclease activities. This chain is ATP-dependent helicase/nuclease subunit A, found in Listeria monocytogenes serotype 4b (strain F2365).